Consider the following 84-residue polypeptide: UPF0473 protein CKL_1327 (84 aa).

The protein belongs to the UPF0473 family.

This chain is UPF0473 protein CKL_1327, found in Clostridium kluyveri (strain ATCC 8527 / DSM 555 / NBRC 12016 / NCIMB 10680 / K1).